A 336-amino-acid chain; its full sequence is Glycerol-3-phosphate dehydrogenase [NAD(P)+] (336 aa).

Positions 16, 17, 37, and 111 each coordinate NADPH. The sn-glycerol 3-phosphate site is built by lysine 111, glycine 140, and threonine 142. Alanine 144 lines the NADPH pocket. Positions 196, 249, 259, 260, and 261 each coordinate sn-glycerol 3-phosphate. Lysine 196 acts as the Proton acceptor in catalysis. NADPH is bound at residue arginine 260. Residues valine 284 and glutamate 286 each coordinate NADPH.

This sequence belongs to the NAD-dependent glycerol-3-phosphate dehydrogenase family.

Its subcellular location is the cytoplasm. It catalyses the reaction sn-glycerol 3-phosphate + NAD(+) = dihydroxyacetone phosphate + NADH + H(+). The catalysed reaction is sn-glycerol 3-phosphate + NADP(+) = dihydroxyacetone phosphate + NADPH + H(+). It participates in membrane lipid metabolism; glycerophospholipid metabolism. Functionally, catalyzes the reduction of the glycolytic intermediate dihydroxyacetone phosphate (DHAP) to sn-glycerol 3-phosphate (G3P), the key precursor for phospholipid synthesis. This chain is Glycerol-3-phosphate dehydrogenase [NAD(P)+], found in Actinobacillus pleuropneumoniae serotype 3 (strain JL03).